Here is a 296-residue protein sequence, read N- to C-terminus: Glycine--tRNA ligase alpha subunit (296 aa).

Belongs to the class-II aminoacyl-tRNA synthetase family. In terms of assembly, tetramer of two alpha and two beta subunits.

The protein resides in the cytoplasm. It catalyses the reaction tRNA(Gly) + glycine + ATP = glycyl-tRNA(Gly) + AMP + diphosphate. The sequence is that of Glycine--tRNA ligase alpha subunit from Synechococcus sp. (strain WH7803).